The primary structure comprises 416 residues: Transcription factor caaR (416 aa).

Positions 13–44 (CDRCYAQKLRCPRPSTNDDASCIRCLRQKVQC) form a DNA-binding region, zn(2)-C6 fungal-type. Disordered regions lie at residues 68 to 90 (ATAG…SDTA) and 130 to 150 (QPPP…GLDN). Residues 130–141 (QPPPLDTTPPPR) show a composition bias toward pro residues. 2 helical membrane-spanning segments follow: residues 249–269 (VIYH…ATLL) and 302–322 (SAPS…TYFL).

Its subcellular location is the membrane. It localises to the nucleus. Functionally, transcription factor that positively regulates the expression of the gene cluster that mediates the biosynthesis of the acyltetronic acid derivatives carlosic acid, agglomerin F and carlosic acid methyl ether. In Aspergillus niger (strain ATCC MYA-4892 / CBS 513.88 / FGSC A1513), this protein is Transcription factor caaR.